The sequence spans 417 residues: Serine hydroxymethyltransferase (417 aa).

Residues L121 and 125 to 127 each bind (6S)-5,6,7,8-tetrahydrofolate; that span reads GHL. K229 carries the post-translational modification N6-(pyridoxal phosphate)lysine. Position 355–357 (355–357) interacts with (6S)-5,6,7,8-tetrahydrofolate; that stretch reads SPF.

The protein belongs to the SHMT family. Homodimer. It depends on pyridoxal 5'-phosphate as a cofactor.

It localises to the cytoplasm. The catalysed reaction is (6R)-5,10-methylene-5,6,7,8-tetrahydrofolate + glycine + H2O = (6S)-5,6,7,8-tetrahydrofolate + L-serine. It functions in the pathway one-carbon metabolism; tetrahydrofolate interconversion. The protein operates within amino-acid biosynthesis; glycine biosynthesis; glycine from L-serine: step 1/1. Functionally, catalyzes the reversible interconversion of serine and glycine with tetrahydrofolate (THF) serving as the one-carbon carrier. This reaction serves as the major source of one-carbon groups required for the biosynthesis of purines, thymidylate, methionine, and other important biomolecules. Also exhibits THF-independent aldolase activity toward beta-hydroxyamino acids, producing glycine and aldehydes, via a retro-aldol mechanism. This is Serine hydroxymethyltransferase from Shewanella oneidensis (strain ATCC 700550 / JCM 31522 / CIP 106686 / LMG 19005 / NCIMB 14063 / MR-1).